We begin with the raw amino-acid sequence, 105 residues long: UPF0145 protein CPS_2458 (105 aa).

The protein belongs to the UPF0145 family.

The protein is UPF0145 protein CPS_2458 of Colwellia psychrerythraea (strain 34H / ATCC BAA-681) (Vibrio psychroerythus).